Here is a 769-residue protein sequence, read N- to C-terminus: DNA helicase/primase complex-associated protein (769 aa).

This sequence belongs to the herpesviridae HEPA family. As to quaternary structure, associates with the primase and the helicase to form the helicase-primase complex. Interacts with the origin-binding protein. Interacts with the polymerase catalytic subunit.

It localises to the host nucleus. Functionally, component of the helicase/primase complex. Unwinds the DNA at the replication forks and generates single-stranded DNA for both leading and lagging strand synthesis. The primase synthesizes short RNA primers on the lagging strand that the polymerase presumably elongates using dNTPs. The primase-associated factor has no known catalytic activity in the complex and may serve to facilitate the formation of the replisome by directly interacting with the origin-binding protein and the polymerase. In Gallus gallus (Chicken), this protein is DNA helicase/primase complex-associated protein (MDV020).